Here is a 156-residue protein sequence, read N- to C-terminus: Probable chemoreceptor glutamine deamidase CheD (156 aa).

This sequence belongs to the CheD family.

The catalysed reaction is L-glutaminyl-[protein] + H2O = L-glutamyl-[protein] + NH4(+). Functionally, probably deamidates glutamine residues to glutamate on methyl-accepting chemotaxis receptors (MCPs), playing an important role in chemotaxis. The chain is Probable chemoreceptor glutamine deamidase CheD from Bdellovibrio bacteriovorus (strain ATCC 15356 / DSM 50701 / NCIMB 9529 / HD100).